Consider the following 404-residue polypeptide: S-adenosylmethionine synthase (404 aa).

Positions 1–13 (MSHSRYFFTSESV) are enriched in polar residues. The disordered stretch occupies residues 1-20 (MSHSRYFFTSESVSEGHPDK). His-17 is a binding site for ATP. Asp-19 is a Mg(2+) binding site. Glu-45 contacts K(+). 2 residues coordinate L-methionine: Glu-58 and Gln-101. The interval 101–111 (QSPDINRGVDR) is flexible loop. Residues 172 to 174 (DSK), 246 to 247 (RF), Asp-255, 261 to 262 (RK), Ala-278, and Lys-282 contribute to the ATP site. Asp-255 contributes to the L-methionine binding site. Lys-286 provides a ligand contact to L-methionine.

It belongs to the AdoMet synthase family. Homotetramer; dimer of dimers. The cofactor is Mg(2+). K(+) is required as a cofactor.

It localises to the cytoplasm. It carries out the reaction L-methionine + ATP + H2O = S-adenosyl-L-methionine + phosphate + diphosphate. It participates in amino-acid biosynthesis; S-adenosyl-L-methionine biosynthesis; S-adenosyl-L-methionine from L-methionine: step 1/1. Its function is as follows. Catalyzes the formation of S-adenosylmethionine (AdoMet) from methionine and ATP. The overall synthetic reaction is composed of two sequential steps, AdoMet formation and the subsequent tripolyphosphate hydrolysis which occurs prior to release of AdoMet from the enzyme. This is S-adenosylmethionine synthase from Chlorobaculum parvum (strain DSM 263 / NCIMB 8327) (Chlorobium vibrioforme subsp. thiosulfatophilum).